An 87-amino-acid chain; its full sequence is Small ribosomal subunit protein uS17 (87 aa).

It belongs to the universal ribosomal protein uS17 family. Part of the 30S ribosomal subunit.

Its function is as follows. One of the primary rRNA binding proteins, it binds specifically to the 5'-end of 16S ribosomal RNA. The chain is Small ribosomal subunit protein uS17 from Alcanivorax borkumensis (strain ATCC 700651 / DSM 11573 / NCIMB 13689 / SK2).